We begin with the raw amino-acid sequence, 125 residues long: RutC family protein STK_08110 (125 aa).

Belongs to the RutC family.

The sequence is that of RutC family protein STK_08110 from Sulfurisphaera tokodaii (strain DSM 16993 / JCM 10545 / NBRC 100140 / 7) (Sulfolobus tokodaii).